The chain runs to 320 residues: Eukaryotic translation initiation factor 3 subunit G (320 aa).

A disordered region spans residues 1–60; that stretch reads MPTGDFDSKPSWADQVEEEGEDDKCVTSELLKGIPLPTGDTSPEPELLPGDPLPPPKEVI. Ser8 and Ser11 each carry phosphoserine. Phosphothreonine is present on residues Thr38 and Thr41. Phosphoserine occurs at positions 42, 189, 223, and 264. Residues 204–233 are disordered; sequence QAAQSKTGKYVPPSLRDGASRRGESMQPNR. Residues 221–233 are compositionally biased toward basic and acidic residues; it reads GASRRGESMQPNR. The RRM domain maps to 239–317; that stretch reads ATIRVTNLSE…LILNVEWAKP (79 aa).

This sequence belongs to the eIF-3 subunit G family. In terms of assembly, component of the eukaryotic translation initiation factor 3 (eIF-3) complex, which is composed of 13 subunits: EIF3A, EIF3B, EIF3C, EIF3D, EIF3E, EIF3F, EIF3G, EIF3H, EIF3I, EIF3J, EIF3K, EIF3L and EIF3M. The eIF-3 complex appears to include 3 stable modules: module A is composed of EIF3A, EIF3B, EIF3G and EIF3I; module B is composed of EIF3F, EIF3H, and EIF3M; and module C is composed of EIF3C, EIF3D, EIF3E, EIF3K and EIF3L. EIF3C of module C binds EIF3B of module A and EIF3H of module B, thereby linking the three modules. EIF3J is a labile subunit that binds to the eIF-3 complex via EIF3B. The eIF-3 complex may interact with RPS6KB1 under conditions of nutrient depletion. Mitogenic stimulation may lead to binding and activation of a complex composed of MTOR and RPTOR, leading to phosphorylation and release of RPS6KB1 and binding of EIF4B to eIF-3. Interacts (via C-terminus) with AIFM1 (via N-terminus). Interacts with DHX33; the interaction is independent of RNA. Phosphorylated. Phosphorylation is enhanced upon serum stimulation.

It localises to the cytoplasm. The protein resides in the nucleus. The protein localises to the perinuclear region. Its function is as follows. RNA-binding component of the eukaryotic translation initiation factor 3 (eIF-3) complex, which is required for several steps in the initiation of protein synthesis. The eIF-3 complex associates with the 40S ribosome and facilitates the recruitment of eIF-1, eIF-1A, eIF-2:GTP:methionyl-tRNAi and eIF-5 to form the 43S pre-initiation complex (43S PIC). The eIF-3 complex stimulates mRNA recruitment to the 43S PIC and scanning of the mRNA for AUG recognition. The eIF-3 complex is also required for disassembly and recycling of post-termination ribosomal complexes and subsequently prevents premature joining of the 40S and 60S ribosomal subunits prior to initiation. The eIF-3 complex specifically targets and initiates translation of a subset of mRNAs involved in cell proliferation, including cell cycling, differentiation and apoptosis, and uses different modes of RNA stem-loop binding to exert either translational activation or repression. This subunit can bind 18S rRNA. This Mus musculus (Mouse) protein is Eukaryotic translation initiation factor 3 subunit G (Eif3g).